The following is a 280-amino-acid chain: MCPPQAQAEVGPTMTEKAEMVCAPSPAPAPPPKPASPGPPQVEEVGHRGGSSPPRLPPGVPVISLGHSRPPGVAMPTTELGTLRPPLLQLSTLGTAPPTLALHYHPHPFLNSVYIGPAGPFSIFPSSRLKRRPSHCELDLAEGHQPQKVARRVFTNSRERWRQQNVNGAFAELRKLLPTHPPDRKLSKNEVLRLAMKYIGFLVRLLRDQAAALAAGPTPPGPRKRPVHRVPDDGARRGSGRRAEAAARSQPAPPADPDGSPGGAARPIKMEQTALSPEVR.

Positions 1–60 (MCPPQAQAEVGPTMTEKAEMVCAPSPAPAPPPKPASPGPPQVEEVGHRGGSSPPRLPPGV) are disordered. A compositionally biased stretch (pro residues) spans 25-40 (SPAPAPPPKPASPGPP). Residues 150–202 (ARRVFTNSRERWRQQNVNGAFAELRKLLPTHPPDRKLSKNEVLRLAMKYIGFL) enclose the bHLH domain. Positions 214–280 (AAGPTPPGPR…EQTALSPEVR (67 aa)) are disordered. The span at 229–245 (RVPDDGARRGSGRRAEA) shows a compositional bias: basic and acidic residues. The segment covering 257-267 (PDGSPGGAARP) has biased composition (low complexity). 2 positions are modified to phosphoserine: serine 260 and serine 276.

Efficient DNA binding requires dimerization with another bHLH protein.

Its subcellular location is the nucleus. This chain is Protein lyl-1 (LYL1), found in Homo sapiens (Human).